The following is a 185-amino-acid chain: ATP synthase subunit b 2 (185 aa).

The segment at 1-23 is disordered; the sequence is MAEGHGDAKGATAHTAADGGHKA. A compositionally biased stretch (low complexity) spans 9–18; the sequence is KGATAHTAAD. Residues 32–51 form a helical membrane-spanning segment; the sequence is TFASQLVSLTIAFVALYLIV.

Belongs to the ATPase B chain family. F-type ATPases have 2 components, F(1) - the catalytic core - and F(0) - the membrane proton channel. F(1) has five subunits: alpha(3), beta(3), gamma(1), delta(1), epsilon(1). F(0) has three main subunits: a(1), b(2) and c(10-14). The alpha and beta chains form an alternating ring which encloses part of the gamma chain. F(1) is attached to F(0) by a central stalk formed by the gamma and epsilon chains, while a peripheral stalk is formed by the delta and b chains.

The protein resides in the cell inner membrane. Its function is as follows. F(1)F(0) ATP synthase produces ATP from ADP in the presence of a proton or sodium gradient. F-type ATPases consist of two structural domains, F(1) containing the extramembraneous catalytic core and F(0) containing the membrane proton channel, linked together by a central stalk and a peripheral stalk. During catalysis, ATP synthesis in the catalytic domain of F(1) is coupled via a rotary mechanism of the central stalk subunits to proton translocation. Component of the F(0) channel, it forms part of the peripheral stalk, linking F(1) to F(0). The b'-subunit is a diverged and duplicated form of b found in plants and photosynthetic bacteria. This is ATP synthase subunit b 2 (atpF2) from Rhodopseudomonas palustris (strain HaA2).